The following is a 61-amino-acid chain: Small ribosomal subunit protein uS14 (61 aa).

C24, C27, C40, and C43 together coordinate Zn(2+).

It belongs to the universal ribosomal protein uS14 family. Zinc-binding uS14 subfamily. As to quaternary structure, part of the 30S ribosomal subunit. Contacts proteins S3 and S10. Zn(2+) serves as cofactor.

In terms of biological role, binds 16S rRNA, required for the assembly of 30S particles and may also be responsible for determining the conformation of the 16S rRNA at the A site. This Thermodesulfovibrio yellowstonii (strain ATCC 51303 / DSM 11347 / YP87) protein is Small ribosomal subunit protein uS14.